We begin with the raw amino-acid sequence, 305 residues long: UDP-N-acetylenolpyruvoylglucosamine reductase (305 aa).

In terms of domain architecture, FAD-binding PCMH-type spans 34–199 (RVGGPAQVLF…TSARFRGEVK (166 aa)). Arg-179 is a catalytic residue. The active-site Proton donor is the Ser-228. Glu-298 is an active-site residue.

The protein belongs to the MurB family. The cofactor is FAD.

The protein resides in the cytoplasm. The catalysed reaction is UDP-N-acetyl-alpha-D-muramate + NADP(+) = UDP-N-acetyl-3-O-(1-carboxyvinyl)-alpha-D-glucosamine + NADPH + H(+). Its pathway is cell wall biogenesis; peptidoglycan biosynthesis. In terms of biological role, cell wall formation. The chain is UDP-N-acetylenolpyruvoylglucosamine reductase from Bradyrhizobium diazoefficiens (strain JCM 10833 / BCRC 13528 / IAM 13628 / NBRC 14792 / USDA 110).